Reading from the N-terminus, the 163-residue chain is Nitrogen regulatory protein (163 aa).

In terms of domain architecture, PTS EIIA type-2 spans 12 to 156 (SVLNRECTRS…EELYQIITDT (145 aa)). Histidine 73 (tele-phosphohistidine intermediate) is an active-site residue.

It localises to the cytoplasm. In terms of biological role, seems to have a role in regulating nitrogen assimilation. The chain is Nitrogen regulatory protein (ptsN) from Escherichia coli (strain K12).